The chain runs to 357 residues: Holliday junction branch migration complex subunit RuvB (357 aa).

Residues 1–20 (MDDHDDSPVSPSFLKSDGEI) are disordered. The tract at residues 1 to 185 (MDDHDDSPVS…FGFTGHMDFY (185 aa)) is large ATPase domain (RuvB-L). ATP contacts are provided by residues Leu24, Arg25, Gly66, Lys69, Thr70, Ser71, 132–134 (EDF), Arg175, Tyr185, and Arg222. Mg(2+) is bound at residue Thr70. The small ATPAse domain (RuvB-S) stretch occupies residues 186–256 (EPGELLRILE…VARAALEVYD (71 aa)). The head domain (RuvB-H) stretch occupies residues 259–357 (TLGLDRLDRA…TSQPTLDLFD (99 aa)). Arg314 and Arg319 together coordinate DNA.

This sequence belongs to the RuvB family. In terms of assembly, homohexamer. Forms an RuvA(8)-RuvB(12)-Holliday junction (HJ) complex. HJ DNA is sandwiched between 2 RuvA tetramers; dsDNA enters through RuvA and exits via RuvB. An RuvB hexamer assembles on each DNA strand where it exits the tetramer. Each RuvB hexamer is contacted by two RuvA subunits (via domain III) on 2 adjacent RuvB subunits; this complex drives branch migration. In the full resolvosome a probable DNA-RuvA(4)-RuvB(12)-RuvC(2) complex forms which resolves the HJ.

It localises to the cytoplasm. It carries out the reaction ATP + H2O = ADP + phosphate + H(+). The RuvA-RuvB-RuvC complex processes Holliday junction (HJ) DNA during genetic recombination and DNA repair, while the RuvA-RuvB complex plays an important role in the rescue of blocked DNA replication forks via replication fork reversal (RFR). RuvA specifically binds to HJ cruciform DNA, conferring on it an open structure. The RuvB hexamer acts as an ATP-dependent pump, pulling dsDNA into and through the RuvAB complex. RuvB forms 2 homohexamers on either side of HJ DNA bound by 1 or 2 RuvA tetramers; 4 subunits per hexamer contact DNA at a time. Coordinated motions by a converter formed by DNA-disengaged RuvB subunits stimulates ATP hydrolysis and nucleotide exchange. Immobilization of the converter enables RuvB to convert the ATP-contained energy into a lever motion, pulling 2 nucleotides of DNA out of the RuvA tetramer per ATP hydrolyzed, thus driving DNA branch migration. The RuvB motors rotate together with the DNA substrate, which together with the progressing nucleotide cycle form the mechanistic basis for DNA recombination by continuous HJ branch migration. Branch migration allows RuvC to scan DNA until it finds its consensus sequence, where it cleaves and resolves cruciform DNA. The sequence is that of Holliday junction branch migration complex subunit RuvB from Nocardia farcinica (strain IFM 10152).